The primary structure comprises 498 residues: ATP synthase subunit beta, chloroplastic (498 aa).

An ATP-binding site is contributed by 172 to 179 (GGAGVGKT).

Belongs to the ATPase alpha/beta chains family. F-type ATPases have 2 components, CF(1) - the catalytic core - and CF(0) - the membrane proton channel. CF(1) has five subunits: alpha(3), beta(3), gamma(1), delta(1), epsilon(1). CF(0) has four main subunits: a(1), b(1), b'(1) and c(9-12).

The protein resides in the plastid. Its subcellular location is the chloroplast thylakoid membrane. The enzyme catalyses ATP + H2O + 4 H(+)(in) = ADP + phosphate + 5 H(+)(out). Its function is as follows. Produces ATP from ADP in the presence of a proton gradient across the membrane. The catalytic sites are hosted primarily by the beta subunits. This is ATP synthase subunit beta, chloroplastic from Montinia caryophyllacea (Wild clove bush).